The sequence spans 504 residues: Maturase K (504 aa).

Belongs to the intron maturase 2 family. MatK subfamily.

It is found in the plastid. The protein localises to the chloroplast. In terms of biological role, usually encoded in the trnK tRNA gene intron. Probably assists in splicing its own and other chloroplast group II introns. This Vigna mungo (Black gram) protein is Maturase K.